The sequence spans 177 residues: MNHAQLRRVTAESFAHYRHGLAQLLFETVHGGASVGFMADLDMQQAYAWCDGLKADIAAGSLLLWVVAEDDNVLASAQLSLCQKPNGLNRAEVQKLMVLPSARGRGLGRQLMDEVEQVAVKHKRGLLHLDTEAGSVAEAFYSALAYTRVGELPGYCATPDGRLHPTAIYFKTLGQPT.

One can recognise an N-acetyltransferase domain in the interval 4 to 174 (AQLRRVTAES…PTAIYFKTLG (171 aa)). Acetyl-CoA-binding positions include Glu-27, 96–98 (LMV), 104–109 (GRGLGR), 130–131 (DT), and Tyr-141.

Its function is as follows. Renders tabtoxin-producing pathogens tolerant to their own phytotoxins. The polypeptide is Acetyltransferase (ttr) (Pseudomonas amygdali pv. tabaci (Pseudomonas syringae pv. tabaci)).